Reading from the N-terminus, the 186-residue chain is Quinone reductase (186 aa).

FMN is bound by residues 13–20 (SLRKESYN), 80–83 (EHNR), and serine 116.

Belongs to the SsuE family. As to quaternary structure, homotetramer. Dimer of dimers. The tetrameric configuration has a central role in chromate reductase activity. The cofactor is FMN.

It catalyses the reaction a quinone + NADH + H(+) = a quinol + NAD(+). The catalysed reaction is a quinone + NADPH + H(+) = a quinol + NADP(+). It carries out the reaction Cr(6+) + 2 NADH + O2 = Cr(3+) + superoxide + 2 NAD(+) + 2 H(+). The enzyme catalyses Cr(6+) + 2 NADPH + O2 = Cr(3+) + superoxide + 2 NADP(+) + 2 H(+). Its activity is regulated as follows. Non-competitively inhibited by sulfate. Catalyzes the reduction of quinones. Acts by simultaneous two-electron transfer, avoiding formation of highly reactive semiquinone intermediates and producing quinols that promote tolerance of H(2)O(2). Quinone reduction is probably the primary biological role of ChrR. Can also reduce toxic chromate to insoluble and less toxic Cr(3+). Catalyzes the transfer of three electrons to Cr(6+) producing Cr(3+) and one electron to molecular oxygen. This reaction produces transiently a minimal amount of the toxic Cr(5+) species and reactive oxygen species (ROS). Chromate reduction protects the cell against chromate toxicity, but is likely a secondary activity. This chain is Quinone reductase (chrR), found in Pseudomonas putida (Arthrobacter siderocapsulatus).